Reading from the N-terminus, the 525-residue chain is Sensory neuron membrane protein 1 (525 aa).

Topologically, residues methionine 1–alanine 11 are cytoplasmic. Residues isoleucine 12–leucine 32 traverse the membrane as a helical segment. Residues lysine 33–arginine 456 lie on the Extracellular side of the membrane. Residues asparagine 67, asparagine 105, and asparagine 229 are each glycosylated (N-linked (GlcNAc...) asparagine). 3 cysteine pairs are disulfide-bonded: cysteine 268/cysteine 333, cysteine 297/cysteine 352, and cysteine 335/cysteine 341. A glycan (N-linked (GlcNAc...) asparagine) is linked at asparagine 440. A helical transmembrane segment spans residues isoleucine 457–valine 477. At methionine 478 to methionine 525 the chain is on the cytoplasmic side. Residues threonine 496–methionine 525 are disordered. Residues glutamine 516–methionine 525 are compositionally biased toward basic and acidic residues.

This sequence belongs to the CD36 family. In terms of tissue distribution, principal component of the olfactory cilia membrane. Localizes to the somata, dendritic neck and cilia of the olfactory neurons (at protein level). Not detected in the axons of ORNs, the cytoplasm of auxiliary cells or non-sensory structures. Expression is universal among ORNs but differential between neuron and sensillum types.

Its subcellular location is the cell membrane. Its function is as follows. Plays an olfactory role that is not restricted to pheromone sensitivity. May be involved in the odor detection properties of the olfactory receptor neurons (ORNs) rather than their differentiation and growth. The sequence is that of Sensory neuron membrane protein 1 from Antheraea polyphemus (Polyphemus moth).